A 321-amino-acid polypeptide reads, in one-letter code: MMMMMSRSGANRVANTAMFVAKGLSGEVGGLRALYGGGVRSESTLALSEKEKIEKKVGLSSAGGNKEEKVIVSYWGIQPSKITKKDGTEWKWNCFSPWGTYKADLSIDLEKHMPPTTFLDKMAFWTVKVLRYPTDVFFQRRYGCRAMMLETVAAVPGMVAGMLLHCKSLRRFEHSGGWFKALLEEAENERMHLMTFMEVAKPKWYERALVITVQGVFFNAYFLGYLLSPKFAHRMFGYLEEEAIHSYTEFLKELDKGNIENVPAPAIAIDYWQLPPGSTLRDVVMVVRADEAHHRDVNHFASDIHYQGRELREAAAPIGYH.

The transit peptide at 1–41 directs the protein to the mitochondrion; sequence MMMMMSRSGANRVANTAMFVAKGLSGEVGGLRALYGGGVRS. Residues 146–166 traverse the membrane as a helical segment; sequence AMMLETVAAVPGMVAGMLLHC. Glutamate 150, glutamate 189, and histidine 192 together coordinate Fe cation. The helical transmembrane segment at 208-228 threads the bilayer; it reads ALVITVQGVFFNAYFLGYLLS. 3 residues coordinate Fe cation: glutamate 240, glutamate 291, and histidine 294.

The protein belongs to the alternative oxidase family. In terms of assembly, homodimer; disulfide-linked. The cofactor is Fe cation.

It is found in the mitochondrion inner membrane. It catalyses the reaction 2 a ubiquinol + O2 = 2 a ubiquinone + 2 H2O. With respect to regulation, when the two monomeric subunits are covalently linked by a S-S bond, the enzyme is essentially inactive. When the disulfide bond is reduced, its component sulfhydryls can associate with K-keto acids through formation of a thiohemiacetal, resulting in enzyme activation. Pyruvate increases Vmax, but not the substrate affinity. In terms of biological role, catalyzes the cyanide-resistant oxidation of ubiquinol and the reduction of molecular oxygen to water, but does not translocate protons and consequently is not linked to oxidative phosphorylation. May increase respiration when the cytochrome respiratory pathway is restricted, or in response to low temperatures. The polypeptide is Ubiquinol oxidase 1, mitochondrial (AOX1) (Glycine max (Soybean)).